The chain runs to 483 residues: Protein nucleotidyltransferase YdiU (483 aa).

ATP contacts are provided by Gly-81, Gly-83, Arg-84, Lys-103, Asp-115, Gly-116, Arg-166, and Arg-173. Asp-244 serves as the catalytic Proton acceptor. Residues Asn-245 and Asp-254 each coordinate Mg(2+). Asp-254 is an ATP binding site.

This sequence belongs to the SELO family. The cofactor is Mg(2+). It depends on Mn(2+) as a cofactor.

The enzyme catalyses L-seryl-[protein] + ATP = 3-O-(5'-adenylyl)-L-seryl-[protein] + diphosphate. The catalysed reaction is L-threonyl-[protein] + ATP = 3-O-(5'-adenylyl)-L-threonyl-[protein] + diphosphate. It carries out the reaction L-tyrosyl-[protein] + ATP = O-(5'-adenylyl)-L-tyrosyl-[protein] + diphosphate. It catalyses the reaction L-histidyl-[protein] + UTP = N(tele)-(5'-uridylyl)-L-histidyl-[protein] + diphosphate. The enzyme catalyses L-seryl-[protein] + UTP = O-(5'-uridylyl)-L-seryl-[protein] + diphosphate. The catalysed reaction is L-tyrosyl-[protein] + UTP = O-(5'-uridylyl)-L-tyrosyl-[protein] + diphosphate. Functionally, nucleotidyltransferase involved in the post-translational modification of proteins. It can catalyze the addition of adenosine monophosphate (AMP) or uridine monophosphate (UMP) to a protein, resulting in modifications known as AMPylation and UMPylation. This is Protein nucleotidyltransferase YdiU from Shewanella pealeana (strain ATCC 700345 / ANG-SQ1).